The primary structure comprises 341 residues: Probable alcohol acetyltransferase (341 aa).

A mitochondrion-targeting transit peptide spans 1–40 (MFASRILRNSAQTLKTELPHKETIKMAYDLHKPRSTAIRH). Positions 48–301 (PILFLHGIFG…NSNHDILDQR (254 aa)) constitute an AB hydrolase-1 domain. Catalysis depends on charge relay system residues serine 121, aspartate 145, and histidine 295.

The protein belongs to the AB hydrolase superfamily.

It is found in the mitochondrion. Functionally, probable alcohol acetyltransferase that uses acetyl-CoA to synthesize acetate esters from various alcohols. Not involved in the synthesis of ethyl acetate. The sequence is that of Probable alcohol acetyltransferase (EAT2) from Wickerhamomyces anomalus (strain ATCC 58044 / CBS 1984 / NCYC 433 / NRRL Y-366-8) (Yeast).